The following is an 800-amino-acid chain: Phenylalanine--tRNA ligase beta subunit (800 aa).

Residues 39-154 (TKDIKNLVVG…ESQVPGTDAL (116 aa)) form the tRNA-binding domain. One can recognise a B5 domain in the interval 408–483 (AFITPIDITA…RIYGYDDIPS (76 aa)). Positions 461, 467, 470, and 471 each coordinate Mg(2+). The region spanning 708–800 (PRFPGMSRDI…ALIEQGAVIR (93 aa)) is the FDX-ACB domain.

The protein belongs to the phenylalanyl-tRNA synthetase beta subunit family. Type 1 subfamily. In terms of assembly, tetramer of two alpha and two beta subunits. Mg(2+) is required as a cofactor.

It is found in the cytoplasm. It carries out the reaction tRNA(Phe) + L-phenylalanine + ATP = L-phenylalanyl-tRNA(Phe) + AMP + diphosphate + H(+). This chain is Phenylalanine--tRNA ligase beta subunit, found in Staphylococcus aureus.